A 341-amino-acid chain; its full sequence is tRNA N6-adenosine threonylcarbamoyltransferase (341 aa).

2 residues coordinate Fe cation: H115 and H119. Residues 137–141, D170, G183, D187, and N276 contribute to the substrate site; that span reads IVSGG. Fe cation is bound at residue D304.

It belongs to the KAE1 / TsaD family. Fe(2+) serves as cofactor.

Its subcellular location is the cytoplasm. It catalyses the reaction L-threonylcarbamoyladenylate + adenosine(37) in tRNA = N(6)-L-threonylcarbamoyladenosine(37) in tRNA + AMP + H(+). Required for the formation of a threonylcarbamoyl group on adenosine at position 37 (t(6)A37) in tRNAs that read codons beginning with adenine. Is involved in the transfer of the threonylcarbamoyl moiety of threonylcarbamoyl-AMP (TC-AMP) to the N6 group of A37, together with TsaE and TsaB. TsaD likely plays a direct catalytic role in this reaction. The protein is tRNA N6-adenosine threonylcarbamoyltransferase of Staphylococcus aureus (strain Mu3 / ATCC 700698).